Reading from the N-terminus, the 553-residue chain is Glucose-6-phosphate isomerase (553 aa).

Glu357 serves as the catalytic Proton donor. Active-site residues include His388 and Lys514. A disordered region spans residues 524–553; that stretch reads ITGAGSPPPQSDSSTDGLVRRYRTERGRAG. Basic and acidic residues predominate over residues 541-553; the sequence is LVRRYRTERGRAG.

This sequence belongs to the GPI family.

Its subcellular location is the cytoplasm. It carries out the reaction alpha-D-glucose 6-phosphate = beta-D-fructose 6-phosphate. It functions in the pathway carbohydrate biosynthesis; gluconeogenesis. It participates in carbohydrate degradation; glycolysis; D-glyceraldehyde 3-phosphate and glycerone phosphate from D-glucose: step 2/4. In terms of biological role, catalyzes the reversible isomerization of glucose-6-phosphate to fructose-6-phosphate. The polypeptide is Glucose-6-phosphate isomerase (Mycobacterium bovis (strain BCG / Tokyo 172 / ATCC 35737 / TMC 1019)).